A 640-amino-acid polypeptide reads, in one-letter code: 1,4-alpha-glucan branching enzyme GlgB (640 aa).

Catalysis depends on Asp317, which acts as the Nucleophile. The active-site Proton donor is the Glu370.

Belongs to the glycosyl hydrolase 13 family. GlgB subfamily. Monomer.

It catalyses the reaction Transfers a segment of a (1-&gt;4)-alpha-D-glucan chain to a primary hydroxy group in a similar glucan chain.. The protein operates within glycan biosynthesis; glycogen biosynthesis. Functionally, catalyzes the formation of the alpha-1,6-glucosidic linkages in glycogen by scission of a 1,4-alpha-linked oligosaccharide from growing alpha-1,4-glucan chains and the subsequent attachment of the oligosaccharide to the alpha-1,6 position. The protein is 1,4-alpha-glucan branching enzyme GlgB of Nitratidesulfovibrio vulgaris (strain ATCC 29579 / DSM 644 / CCUG 34227 / NCIMB 8303 / VKM B-1760 / Hildenborough) (Desulfovibrio vulgaris).